The following is a 639-amino-acid chain: 3-oxocholoyl-CoA 4-desaturase (639 aa).

Residue Gln-101 coordinates FMN. 155 to 158 provides a ligand contact to substrate; it reads HAAH. The Proton donor role is filled by Tyr-160. Residues Arg-208, Arg-286, and 308–309 each bind FMN; that span reads GR. Positions 332 and 335 each coordinate [4Fe-4S] cluster. Residue Gln-337 coordinates FAD. [4Fe-4S] cluster-binding residues include Cys-339 and Cys-353. Residues Ala-383, Glu-402, Gln-410, Lys-420, and Val-447 each contribute to the FAD site.

This sequence in the N-terminal section; belongs to the NADH:flavin oxidoreductase/NADH oxidase family. FMN is required as a cofactor. The cofactor is FAD. It depends on [4Fe-4S] cluster as a cofactor.

It carries out the reaction 7alpha,12alpha-dihydroxy-3-oxochol-24-oyl-CoA + NAD(+) = 7alpha,12alpha-dihydroxy-3-oxochol-4-en-24-oyl-CoA + NADH + H(+). The catalysed reaction is 7alpha-hydroxy-3-oxochol-24-oyl-CoA + NAD(+) = 7alpha-hydroxy-3-oxochol-4-en-24-oyl-CoA + NADH + H(+). Its pathway is lipid metabolism; bile acid degradation. Stereo-specific NAD(H)-dependent 3-oxo-delta4-cholenoic acid oxidoreductase involved in bile acid 7alpha-dehydroxylation. The protein is 3-oxocholoyl-CoA 4-desaturase of Clostridium scindens (strain JCM 10418 / VPI 12708).